Reading from the N-terminus, the 986-residue chain is Replication factor C subunit 1 (986 aa).

Residues 1-95 (MQRGIDSFFK…ALSKLKRHVD (95 aa)) form a disordered region. Phosphoserine is present on residues Ser-18, Ser-28, Ser-40, Ser-41, Ser-48, and Ser-58. Residue Thr-60 is modified to Phosphothreonine. Phosphoserine occurs at positions 62 and 63. Position 71 is a phosphothreonine (Thr-71). Phosphoserine occurs at positions 128, 137, 149, 154, 156, 164, and 194. Residues 136-147 (ESIKEAAPEKKV) show a composition bias toward basic and acidic residues. 2 disordered regions span residues 136 to 203 (ESIK…ERHE) and 317 to 388 (KQVK…NDVP). Thr-197 is modified (phosphothreonine). Positions 232 to 322 (GSPDCLSGLT…SGIAKQVKEE (91 aa)) constitute a BRCT domain. 2 stretches are compositionally biased toward basic and acidic residues: residues 317–364 (KQVK…EKHD) and 370–385 (VKEEHTSPKETKDKLN). An ATP-binding site is contributed by 487-494 (GPPGIGKT). The disordered stretch occupies residues 913 to 986 (SEAAGADDDY…ASKSKAKAKK (74 aa)). Residues 917 to 932 (GADDDYLDEGPGEEDG) show a composition bias toward acidic residues. 2 positions are modified to phosphoserine: Ser-938 and Ser-939. Positions 955 to 959 (KAKKR) match the Nuclear localization signal motif. A compositionally biased stretch (low complexity) spans 962–979 (TSKASGGSKKATSSTASK).

It belongs to the activator 1 large subunit family. In terms of assembly, interacts with C-terminus of PCNA.

It localises to the nucleus. Functionally, the elongation of primed DNA templates by DNA polymerase delta and epsilon requires the action of the accessory proteins proliferating cell nuclear antigen (PCNA) and activator 1. This subunit binds to the primer-template junction. This Drosophila melanogaster (Fruit fly) protein is Replication factor C subunit 1 (Gnf1).